We begin with the raw amino-acid sequence, 161 residues long: Cyclic pyranopterin monophosphate synthase (161 aa).

Substrate is bound by residues 75-77 (LCH) and 113-114 (ME). D128 is an active-site residue.

The protein belongs to the MoaC family. Homohexamer; trimer of dimers.

The enzyme catalyses (8S)-3',8-cyclo-7,8-dihydroguanosine 5'-triphosphate = cyclic pyranopterin phosphate + diphosphate. It participates in cofactor biosynthesis; molybdopterin biosynthesis. In terms of biological role, catalyzes the conversion of (8S)-3',8-cyclo-7,8-dihydroguanosine 5'-triphosphate to cyclic pyranopterin monophosphate (cPMP). The polypeptide is Cyclic pyranopterin monophosphate synthase (Escherichia coli O139:H28 (strain E24377A / ETEC)).